The chain runs to 449 residues: UDP-N-acetylmuramate--L-alanine ligase (449 aa).

Residue G121 to S127 participates in ATP binding.

It belongs to the MurCDEF family.

It localises to the cytoplasm. The enzyme catalyses UDP-N-acetyl-alpha-D-muramate + L-alanine + ATP = UDP-N-acetyl-alpha-D-muramoyl-L-alanine + ADP + phosphate + H(+). It functions in the pathway cell wall biogenesis; peptidoglycan biosynthesis. In terms of biological role, cell wall formation. The polypeptide is UDP-N-acetylmuramate--L-alanine ligase (Helicobacter pylori (strain J99 / ATCC 700824) (Campylobacter pylori J99)).